A 218-amino-acid chain; its full sequence is 3-oxo-tetronate 4-phosphate decarboxylase (218 aa).

Glu86 (proton acceptor) is an active-site residue. The Zn(2+) site is built by Glu86, His105, and His107. Catalysis depends on Tyr132, which acts as the Proton donor. Position 172 (His172) interacts with Zn(2+).

It belongs to the aldolase class II family. AraD/FucA subfamily. Zn(2+) serves as cofactor.

The catalysed reaction is 3-dehydro-4-O-phospho-D-erythronate + H(+) = dihydroxyacetone phosphate + CO2. It catalyses the reaction 3-dehydro-4-O-phospho-L-erythronate + H(+) = dihydroxyacetone phosphate + CO2. Its function is as follows. Catalyzes the decarboxylation of 3-oxo-tetronate 4-phosphate to dihydroxyacetone phosphate (DHAP) and CO(2). The chain is 3-oxo-tetronate 4-phosphate decarboxylase from Pectobacterium atrosepticum (strain SCRI 1043 / ATCC BAA-672) (Erwinia carotovora subsp. atroseptica).